Consider the following 492-residue polypeptide: GlcNAc-binding protein A (492 aa).

The N-terminal stretch at 1–23 is a signal peptide; the sequence is MNKSSTKTLIALSMMAVSSGVSA. Residues 24 to 204 form the Chitin-binding type-4 domain; it reads HGYVSETNDG…AFYNVIDVKF (181 aa). The Chitin-binding type-3 domain maps to 443–484; sequence AGTKVLAEDSNVYQCKEFPYSGYCVQWTETATNFAPGVGSDW.

The protein belongs to the GbpA family.

Its subcellular location is the secreted. In terms of biological role, probably interacts with GlcNAc residues. May promote attachment to both epithelial cell surfaces and chitin. In Aliivibrio fischeri (strain MJ11) (Vibrio fischeri), this protein is GlcNAc-binding protein A.